The sequence spans 301 residues: Protoheme IX farnesyltransferase (301 aa).

A run of 9 helical transmembrane segments spans residues 16 to 36 (VVAL…PGIP), 41 to 61 (IQSG…AAAI), 93 to 113 (VFAG…VNLI), 114 to 134 (TAVL…VYLK), 141 to 161 (IVIG…AVTG), 172 to 192 (SLLV…LAIF), 217 to 237 (QILL…ATGM), 238 to 258 (SGVF…WYAW), and 273 to 293 (FGYS…DHWL).

It belongs to the UbiA prenyltransferase family. Protoheme IX farnesyltransferase subfamily.

It is found in the cell inner membrane. It carries out the reaction heme b + (2E,6E)-farnesyl diphosphate + H2O = Fe(II)-heme o + diphosphate. Its pathway is porphyrin-containing compound metabolism; heme O biosynthesis; heme O from protoheme: step 1/1. Functionally, converts heme B (protoheme IX) to heme O by substitution of the vinyl group on carbon 2 of heme B porphyrin ring with a hydroxyethyl farnesyl side group. The sequence is that of Protoheme IX farnesyltransferase from Xylella fastidiosa (strain 9a5c).